We begin with the raw amino-acid sequence, 99 residues long: Putative type 4B encapsulin shell protein PF1875 (99 aa).

It belongs to the encapsulin family. Family 4B subfamily. In terms of assembly, may self-assemble into facets and potentially into larger complexes.

It localises to the encapsulin nanocompartment. In terms of biological role, may be the encapsulin shell protein in a type 4 A-domain encapsulin nanocompartment system. Its cargo may be upstream glyceraldehyde-3-phosphate dehydrogenase (AC P61879). This chain is Putative type 4B encapsulin shell protein PF1875, found in Pyrococcus furiosus (strain ATCC 43587 / DSM 3638 / JCM 8422 / Vc1).